A 248-amino-acid polypeptide reads, in one-letter code: UDP-N-acetyl-D-mannosaminuronic acid transferase (248 aa).

Belongs to the glycosyltransferase 26 family.

It catalyses the reaction UDP-N-acetyl-alpha-D-mannosaminouronate + N-acetyl-alpha-D-glucosaminyl-di-trans,octa-cis-undecaprenyl diphosphate = beta-D-ManNAcA-(1-&gt;4)-alpha-D-GlcNAc-di-trans,octa-cis-undecaprenyl diphosphate + UDP + H(+). Its pathway is bacterial outer membrane biogenesis; enterobacterial common antigen biosynthesis. Functionally, catalyzes the synthesis of Und-PP-GlcNAc-ManNAcA (Lipid II), the second lipid-linked intermediate involved in enterobacterial common antigen (ECA) synthesis. The polypeptide is UDP-N-acetyl-D-mannosaminuronic acid transferase (Klebsiella pneumoniae subsp. pneumoniae (strain ATCC 700721 / MGH 78578)).